Here is a 395-residue protein sequence, read N- to C-terminus: Methylmalonyl-CoA decarboxylase subunit beta (395 aa).

The next 9 membrane-spanning stretches (helical) occupy residues 17–37, 43–63, 103–123, 128–148, 180–200, 230–250, 278–298, 304–324, and 374–394; these read LNMGSIIMMLVACVFLYLAIA, LLLVPISFGILLTNLPFAGMM, GIFPPLIFLGVGAMTDFGPLI, SLLLGAAAQFGIFVTFFGAIA, PHLMGPIAVAAYSYMALVPII, IIFPIVVTILVSLIVPPAATL, INIITIFLGVTVGATATAEAF, LAILGLGIVAFGIGTGSGVLL, and GPNVAGVIGSAVSAGVLLSLF.

The protein belongs to the GcdB/MmdB/OadB family. In terms of assembly, the methylmalonyl-CoA decarboxylase is composed of four subunits: the carboxyltransferase alpha subunit (MmdA), the tunnel beta subunit (MmdB), the biotin-containing gamma subunit (MmdC) and the delta subunit (MmdD). The N-terminus is blocked.

The protein resides in the cell membrane. It carries out the reaction (S)-methylmalonyl-CoA + Na(+)(in) + H(+)(out) = propanoyl-CoA + Na(+)(out) + CO2. Tunnel subunit of the sodium ion pump methylmalonyl-CoA decarboxylase, which converts the chemical energy of a decarboxylation reaction into an electrochemical gradient of Na(+) ions across the cytoplasmic membrane, thereby creating a sodium ion motive force that is used for ATP synthesis. The beta subunit catalyzes the decarboxylation of the carboxybiotin carrier protein and the coupled export of Na(+) ions. This chain is Methylmalonyl-CoA decarboxylase subunit beta, found in Propionigenium modestum.